The chain runs to 166 residues: UPF0304 protein VS_1049 (166 aa).

This sequence belongs to the UPF0304 family.

The sequence is that of UPF0304 protein VS_1049 from Vibrio atlanticus (strain LGP32) (Vibrio splendidus (strain Mel32)).